Reading from the N-terminus, the 430-residue chain is Protein DSE3 (430 aa).

S395 bears the Phosphoserine mark.

The protein localises to the bud neck. May be involved in the establishment of the daughter fate. This chain is Protein DSE3 (DSE3), found in Saccharomyces cerevisiae (strain ATCC 204508 / S288c) (Baker's yeast).